We begin with the raw amino-acid sequence, 64 residues long: MPKMKTKSGAAKRFLKTASGFKHKHAFKSHILTKMSTKRKRQLRGASLLHPSDVAKVERMLRVR.

The protein belongs to the bacterial ribosomal protein bL35 family.

The protein is Large ribosomal subunit protein bL35 of Pseudomonas entomophila (strain L48).